Consider the following 448-residue polypeptide: Tubulin beta chain (448 aa).

Gln-11, Glu-69, Ser-138, Gly-142, Thr-143, Gly-144, Asn-204, and Asn-226 together coordinate GTP. Residue Glu-69 participates in Mg(2+) binding. The disordered stretch occupies residues Tyr-425–Glu-448. A compositionally biased stretch (acidic residues) spans Gly-429 to Glu-448.

It belongs to the tubulin family. In terms of assembly, dimer of alpha and beta chains. A typical microtubule is a hollow water-filled tube with an outer diameter of 25 nm and an inner diameter of 15 nM. Alpha-beta heterodimers associate head-to-tail to form protofilaments running lengthwise along the microtubule wall with the beta-tubulin subunit facing the microtubule plus end conferring a structural polarity. Microtubules usually have 13 protofilaments but different protofilament numbers can be found in some organisms and specialized cells. Mg(2+) is required as a cofactor.

The protein localises to the cytoplasm. It is found in the cytoskeleton. Tubulin is the major constituent of microtubules, a cylinder consisting of laterally associated linear protofilaments composed of alpha- and beta-tubulin heterodimers. Microtubules grow by the addition of GTP-tubulin dimers to the microtubule end, where a stabilizing cap forms. Below the cap, tubulin dimers are in GDP-bound state, owing to GTPase activity of alpha-tubulin. This chain is Tubulin beta chain, found in Metarhizium anisopliae (Entomophthora anisopliae).